Consider the following 716-residue polypeptide: Calpain clp-4 (716 aa).

Residues 31–53 (DDDDKQEAPVAVSKAPKGKGSNH) form a disordered region. The Calpain catalytic domain occupies 240–536 (LFEDPEFPAT…FTQMEVCNLT (297 aa)). Catalysis depends on residues C295, H452, and N476.

It belongs to the peptidase C2 family.

Functionally, calcium-regulated non-lysosomal thiol-protease which catalyzes limited proteolysis of substrates. Promotes starvation-induced muscle atrophy. The polypeptide is Calpain clp-4 (Caenorhabditis elegans).